The following is a 351-amino-acid chain: Anthranilate phosphoribosyltransferase (351 aa).

Residues Gly80, 83–84, Thr88, 90–93, 108–116, and Ser120 contribute to the 5-phospho-alpha-D-ribose 1-diphosphate site; these read GD, NIST, and KHGNRSVTS. Gly80 serves as a coordination point for anthranilate. Ser92 serves as a coordination point for Mg(2+). Residue Asn111 coordinates anthranilate. Arg166 is a binding site for anthranilate. Mg(2+) is bound by residues Asp229 and Glu230.

The protein belongs to the anthranilate phosphoribosyltransferase family. Homodimer. It depends on Mg(2+) as a cofactor.

The enzyme catalyses N-(5-phospho-beta-D-ribosyl)anthranilate + diphosphate = 5-phospho-alpha-D-ribose 1-diphosphate + anthranilate. The protein operates within amino-acid biosynthesis; L-tryptophan biosynthesis; L-tryptophan from chorismate: step 2/5. Functionally, catalyzes the transfer of the phosphoribosyl group of 5-phosphorylribose-1-pyrophosphate (PRPP) to anthranilate to yield N-(5'-phosphoribosyl)-anthranilate (PRA). The polypeptide is Anthranilate phosphoribosyltransferase (Chlorobium limicola (strain DSM 245 / NBRC 103803 / 6330)).